The chain runs to 667 residues: Gamma-tubulin complex component 4 (667 aa).

Positions 424–446 are disordered; that stretch reads DHKADATQPREVPSRETSPREAP.

The protein belongs to the TUBGCP family. As to quaternary structure, component of the gamma-tubulin ring complex (gTuRC) consisting of TUBGCP2, TUBGCP3, TUBGCP4, TUBGCP5 and TUBGCP6 and gamma-tubulin TUBG1 or TUBG2. TUBGCP2, TUBGCP3, TUBGCP4, TUBGCP5 and TUBGCP6 assemble in a 5:5:2:1:1 stoichiometry; each is associated with a gamma-tubulin, thereby arranging 14 gamma-tubulins in a helical manner. Gamma-tubulin at the first position is blocked by TUBGCP3 at the last position, allowing 13 protafilaments to grow into a microtubule. The gTuRC (via TUBGCP3 and TUBGCP6) interacts with ACTB and MZT1; the interactions form a luminal bridge that stabilizes the initial structure during complex assembly. The gTuRC (via TUBGCP2) interacts with MZT2A/MZT2B and CDK5RAP2 (via CM1 motif); the interactions play a role in gTuRC activation. Interacts with NINL. Interacts with ATF5; the ATF5:PCNT:polyglutamylated tubulin (PGT) tripartite unites the mother centriole and the pericentriolar material (PCM) in the centrosome.

Its subcellular location is the cytoplasm. The protein localises to the cytoskeleton. It is found in the microtubule organizing center. The protein resides in the centrosome. Component of the gamma-tubulin ring complex (gTuRC) which mediates microtubule nucleation. The gTuRC regulates the minus-end nucleation of alpha-beta tubulin heterodimers that grow into microtubule protafilaments, a critical step in centrosome duplication and spindle formation. The protein is Gamma-tubulin complex component 4 (Tubgcp4) of Mus musculus (Mouse).